The chain runs to 112 residues: Large ribosomal subunit protein eL30 (112 aa).

This sequence belongs to the eukaryotic ribosomal protein eL30 family.

In Zea mays (Maize), this protein is Large ribosomal subunit protein eL30 (RPL30).